Consider the following 211-residue polypeptide: Superoxide dismutase [Mn], mitochondrial (211 aa).

Residues 1-24 (MLCRAVCSASRRLAPALGILGVRQ) constitute a mitochondrion transit peptide. H50 contributes to the Mn(2+) binding site. Residue Y58 is modified to 3'-nitrotyrosine. N6-acetyllysine; alternate is present on residues K68 and K75. N6-succinyllysine; alternate occurs at positions 68 and 75. A Mn(2+)-binding site is contributed by H98. K114 is modified (N6-acetyllysine). Residues K122 and K130 each carry the N6-acetyllysine; alternate modification. An N6-succinyllysine; alternate mark is found at K122 and K130. Positions 183 and 187 each coordinate Mn(2+). K202 bears the N6-acetyllysine mark.

It belongs to the iron/manganese superoxide dismutase family. In terms of assembly, homotetramer. Mn(2+) serves as cofactor. Nitrated under oxidative stress. Nitration coupled with oxidation inhibits the catalytic activity. Post-translationally, acetylation at Lys-122 decreases enzymatic activity. Deacetylated by SIRT3 upon exposure to ionizing radiations or after long fasting. In terms of processing, polyubiquitinated; leading to proteasomal degradation. Deubiquitinated by USP36 which increases protein stability.

It is found in the mitochondrion matrix. The enzyme catalyses 2 superoxide + 2 H(+) = H2O2 + O2. Its function is as follows. Destroys superoxide anion radicals which are normally produced within the cells and which are toxic to biological systems. The protein is Superoxide dismutase [Mn], mitochondrial (SOD2) of Cavia porcellus (Guinea pig).